Consider the following 952-residue polypeptide: MIEKTYQPSDIESRMSRVWEEAGAFKAGRPERREAEPFTIVIPPPNVTGSLHMGHALNNTLQDVLCRFERMRGRDVLWQPGTDHAGIATQMVVERQLMERKEPGRREMGRARFLERVWQWKAESGGVIVNQLKRLGASCDWSRERFTMDEGLSRAVAKVFVELHRAGLIYKDKRLVNWDPKLLTAISDLEVKQVEVKGSLWHLRYPIEGKAFDPSDPSTYIVVATTRPETMLGDTAVAVHPENAKLEYLIGSNVVLPLAGRIIPIVGDDYADPEKGTGAVKITPAHDFNDFEVGRRHHLPQISVLDREGRLTLSENEDFLRGLPSGALMLAEEFDGMDRFAARKAIVARLEEFGFLDKIEPHTHMVPHGDRSNAVVEPYLTDQWYVDAKELARPAMAAVRSGETAFVPKNWEKTYFEWMENIQPWCISRQLWWGHQIPAWYGPDGKVFVAETEDEAIGHALGYYVEQGVITAEQGAGMARDPAKRDGFITRDEDVLDTWFSSALWPFSTLGWPDETPEVRRYYPTNVLVTGFDIIFFWVARMMMMGIHFMKEAPFSTVYIHALVRDEKGAKMSKSKGNVIDPLNLVDKYGADALRFTLAAMAVQGRDIKLSPQRVEGYRNFATKFWNACRFAEMNDCVVPARFDPTAATETLNRWIVHETARTACEVTEAIESSRFNDAASAIYRFVWNVYCDWYLELAKPVILGEDSPAKSETRAMVAWARDEILKLLHPFMPFITEELWAVTAERTRLLTLTEWPNKADQTRKRRTLIAAADPFIGSEPITDLLEPYFRDDAAEAEIGWVVDLVTAIRSVRAEMNIPPATLAPLVLAGASDESRARAQRWSDVIKRMSRLADISFADQAPAGAVQLLIRGEVAALPLKGIVDVAAQRTRLGKEIAKADADIARVDLKLADQNFIANAPGEIVEDEKEKREAAAARKAKFVEALERLKAAE.

A 'HIGH' region motif is present at residues 45 to 55 (PNVTGSLHMGH). Residues 571–575 (KMSKS) carry the 'KMSKS' region motif. Residue K574 participates in ATP binding. A coiled-coil region spans residues 894–950 (KEIAKADADIARVDLKLADQNFIANAPGEIVEDEKEKREAAAARKAKFVEALERLKA).

The protein belongs to the class-I aminoacyl-tRNA synthetase family. ValS type 1 subfamily. In terms of assembly, monomer.

It is found in the cytoplasm. It carries out the reaction tRNA(Val) + L-valine + ATP = L-valyl-tRNA(Val) + AMP + diphosphate. Catalyzes the attachment of valine to tRNA(Val). As ValRS can inadvertently accommodate and process structurally similar amino acids such as threonine, to avoid such errors, it has a 'posttransfer' editing activity that hydrolyzes mischarged Thr-tRNA(Val) in a tRNA-dependent manner. This is Valine--tRNA ligase from Nitrobacter winogradskyi (strain ATCC 25391 / DSM 10237 / CIP 104748 / NCIMB 11846 / Nb-255).